A 165-amino-acid polypeptide reads, in one-letter code: Nucleotide-binding protein Tfu_2672 (165 aa).

This sequence belongs to the YajQ family.

Nucleotide-binding protein. This chain is Nucleotide-binding protein Tfu_2672, found in Thermobifida fusca (strain YX).